The primary structure comprises 227 residues: Ornithine decarboxylase antizyme 1 (227 aa).

Residues 20 to 50 form a disordered region; that stretch reads EGDKPSATVHATRTMPLLSLHSRGGRSSESS. The segment covering 36-50 has biased composition (low complexity); the sequence is LLSLHSRGGRSSESS.

Belongs to the ODC antizyme family. Interacts with ODC1 and thereby sterically blocks ODC homodimerization. Forms a ternary complex with PSMB4 and OAZ1 before PSMB4 is incorporated into the 20S proteasome. Interacts with AZIN2; this interaction disrupts the interaction between the antizyme and ODC1. Interacts with FAM171A1.

Its function is as follows. Ornithine decarboxylase (ODC) antizyme protein that negatively regulates ODC activity and intracellular polyamine biosynthesis and uptake in response to increased intracellular polyamine levels. Binds to ODC monomers, inhibiting the assembly of the functional ODC homodimer, and targets the monomers for ubiquitin-independent proteolytic destruction by the 26S proteasome. Triggers ODC degradation by inducing the exposure of a cryptic proteasome-interacting surface of ODC. Stabilizes AZIN2 by interfering with its ubiquitination. Also inhibits cellular uptake of polyamines by inactivating the polyamine uptake transporter. SMAD1/OAZ1/PSMB4 complex mediates the degradation of the CREBBP/EP300 repressor SNIP1. Involved in the translocation of AZIN2 from ER-Golgi intermediate compartment (ERGIC) to the cytosol. In Bos taurus (Bovine), this protein is Ornithine decarboxylase antizyme 1 (OAZ1).